A 131-amino-acid polypeptide reads, in one-letter code: MALWLTVVIALTCLGGLASPSPVTPSPTLKELIEELVNITQNQASLCNGSMVWSVNLTAGMYCAALESLINVSDCSAIQRTQRMLKALCSQKPAAGQISSERSRDTKIEVIQLVKNLLTYVRGVYRHGNFR.

The signal sequence occupies residues 1–18 (MALWLTVVIALTCLGGLA). Asn-38, Asn-48, Asn-56, and Asn-71 each carry an N-linked (GlcNAc...) asparagine glycan. 2 cysteine pairs are disulfide-bonded: Cys-47–Cys-75 and Cys-63–Cys-89.

It belongs to the IL-4/IL-13 family. As to quaternary structure, interacts with IL13RA2.

It is found in the secreted. Functionally, cytokine that plays important roles in allergic inflammation and immune response to parasite infection. Synergizes with IL2 in regulating interferon-gamma synthesis. Stimulates B-cell proliferation, and activation of eosinophils, basophils, and mast cells. Plays an important role in controlling IL33 activity by modulating the production of transmembrane and soluble forms of interleukin-1 receptor-like 1/IL1RL1. Displays the capacity to antagonize Th1-driven proinflammatory immune response and downregulates synthesis of many proinflammatory cytokines including IL1, IL6, IL10, IL12 and TNF-alpha through a mechanism that partially involves suppression of NF-kappa-B. Also functions on nonhematopoietic cells, including endothelial cells where it induces vascular cell adhesion protein 1/VCAM1, which is important in the recruitment of eosinophils. Exerts its biological effects through its receptors which comprises the IL4R chain and the IL13RA1 chain, to activate JAK1 and TYK2, leading to the activation of STAT6. Aside from IL13RA1, another receptor IL13RA2 acts as a high affinity decoy for IL13 and mediates internalization and depletion of extracellular IL13. This Canis lupus familiaris (Dog) protein is Interleukin-13 (IL13).